A 203-amino-acid chain; its full sequence is Small ribosomal subunit protein uS4 (203 aa).

The 61-residue stretch at 92–152 folds into the S4 RNA-binding domain; sequence LRLATVLLRA…EKSRKLVPFI (61 aa).

It belongs to the universal ribosomal protein uS4 family. As to quaternary structure, part of the 30S ribosomal subunit. Contacts protein S5. The interaction surface between S4 and S5 is involved in control of translational fidelity.

Its function is as follows. One of the primary rRNA binding proteins, it binds directly to 16S rRNA where it nucleates assembly of the body of the 30S subunit. Functionally, with S5 and S12 plays an important role in translational accuracy. In Thermobifida fusca (strain YX), this protein is Small ribosomal subunit protein uS4.